The following is a 354-amino-acid chain: Uroporphyrinogen decarboxylase (354 aa).

Substrate is bound by residues 27-31, Asp-77, Tyr-154, Thr-209, and His-327; that span reads RQAGR.

It belongs to the uroporphyrinogen decarboxylase family. In terms of assembly, homodimer.

It is found in the cytoplasm. The catalysed reaction is uroporphyrinogen III + 4 H(+) = coproporphyrinogen III + 4 CO2. The protein operates within porphyrin-containing compound metabolism; protoporphyrin-IX biosynthesis; coproporphyrinogen-III from 5-aminolevulinate: step 4/4. In terms of biological role, catalyzes the decarboxylation of four acetate groups of uroporphyrinogen-III to yield coproporphyrinogen-III. The protein is Uroporphyrinogen decarboxylase of Shigella flexneri serotype 5b (strain 8401).